The sequence spans 178 residues: C-phycoerythrin class 2 subunit beta (178 aa).

Phycourobilin is bound by residues C50 and C61. The (2R,3E)-phycoerythrobilin site is built by C82 and C159.

This sequence belongs to the phycobiliprotein family. As to quaternary structure, heterodimer of an alpha and a beta chain. Contains two covalently linked phycoerythrobilin chromophores and one covalently linked phycourobilin chromophore.

It is found in the cellular thylakoid membrane. In terms of biological role, light-harvesting photosynthetic bile pigment-protein from the phycobiliprotein complex. In Synechococcus sp. (strain WH8020), this protein is C-phycoerythrin class 2 subunit beta (mpeB).